Reading from the N-terminus, the 145-residue chain is Transcription antitermination protein NusB (145 aa).

It belongs to the NusB family.

In terms of biological role, involved in transcription antitermination. Required for transcription of ribosomal RNA (rRNA) genes. Binds specifically to the boxA antiterminator sequence of the ribosomal RNA (rrn) operons. The protein is Transcription antitermination protein NusB of Paraburkholderia phymatum (strain DSM 17167 / CIP 108236 / LMG 21445 / STM815) (Burkholderia phymatum).